Reading from the N-terminus, the 380-residue chain is tRNA-specific 2-thiouridylase MnmA (380 aa).

ATP is bound by residues G9–S16 and M35. The interval N94–D96 is interaction with target base in tRNA. The active-site Nucleophile is C99. C99 and C195 are oxidised to a cystine. Residue G123 participates in ATP binding. Residues K145–Q147 are interaction with tRNA. The active-site Cysteine persulfide intermediate is the C195. Residues R308–Y309 form an interaction with tRNA region.

The protein belongs to the MnmA/TRMU family.

The protein resides in the cytoplasm. It carries out the reaction S-sulfanyl-L-cysteinyl-[protein] + uridine(34) in tRNA + AH2 + ATP = 2-thiouridine(34) in tRNA + L-cysteinyl-[protein] + A + AMP + diphosphate + H(+). Catalyzes the 2-thiolation of uridine at the wobble position (U34) of tRNA, leading to the formation of s(2)U34. This is tRNA-specific 2-thiouridylase MnmA from Stenotrophomonas maltophilia (strain K279a).